The following is a 137-amino-acid chain: Large ribosomal subunit protein uL16 (137 aa).

Belongs to the universal ribosomal protein uL16 family. As to quaternary structure, part of the 50S ribosomal subunit.

Functionally, binds 23S rRNA and is also seen to make contacts with the A and possibly P site tRNAs. The sequence is that of Large ribosomal subunit protein uL16 from Lactococcus lactis subsp. lactis (strain IL1403) (Streptococcus lactis).